Consider the following 145-residue polypeptide: Large ribosomal subunit protein uL15 (145 aa).

Residues 1 to 50 are disordered; it reads MLHTIKPVANARKTTKRLGRGPGSGTGKTSGKGHKGQLARSGKTLRPGFE. A compositionally biased stretch (gly residues) spans 20–30; the sequence is RGPGSGTGKTS.

The protein belongs to the universal ribosomal protein uL15 family. As to quaternary structure, part of the 50S ribosomal subunit.

Its function is as follows. Binds to the 23S rRNA. In Phytoplasma australiense, this protein is Large ribosomal subunit protein uL15.